The following is a 351-amino-acid chain: Ion-translocating oxidoreductase complex subunit D (351 aa).

The next 4 membrane-spanning stretches (helical) occupy residues 18 to 38, 40 to 60, 87 to 107, and 121 to 141; these read IMLL…YFFG, GSLI…GAVL, LPPL…IVIA, and PAMV…TSWL. The residue at position 185 (Thr185) is an FMN phosphoryl threonine. 5 helical membrane-spanning segments follow: residues 211-231, 241-261, 264-284, 298-318, and 320-340; these read VLAG…GLLL, IPVS…MIAP, FASP…FFIA, LIFG…GGYP, and GVAF…HYTQ.

The protein belongs to the NqrB/RnfD family. The complex is composed of six subunits: RnfA, RnfB, RnfC, RnfD, RnfE and RnfG. FMN serves as cofactor.

It is found in the cell inner membrane. Part of a membrane-bound complex that couples electron transfer with translocation of ions across the membrane. In Yersinia pseudotuberculosis serotype O:1b (strain IP 31758), this protein is Ion-translocating oxidoreductase complex subunit D.